The chain runs to 122 residues: Large ribosomal subunit protein bL12 (122 aa).

The protein belongs to the bacterial ribosomal protein bL12 family. Homodimer. Part of the ribosomal stalk of the 50S ribosomal subunit. Forms a multimeric L10(L12)X complex, where L10 forms an elongated spine to which 2 to 4 L12 dimers bind in a sequential fashion. Binds GTP-bound translation factors.

Functionally, forms part of the ribosomal stalk which helps the ribosome interact with GTP-bound translation factors. Is thus essential for accurate translation. The polypeptide is Large ribosomal subunit protein bL12 (Xylella fastidiosa (strain 9a5c)).